Here is a 408-residue protein sequence, read N- to C-terminus: Putative gustatory receptor 98c (408 aa).

At 1–42 (MEMEAKRSRLLTTARPYLQVLSLFGLTPPAEFFTRTLRKRRR) the chain is on the cytoplasmic side. The helical transmembrane segment at 43-63 (FCWMAGYSLYLIAILLMVFYE) threads the bilayer. Residues 64–92 (FHANIVSLHLEIYKFHVEDFSKVMGRTQK) are Extracellular-facing. Residues 93-113 (FLIVAIATCNQLNILLNYGRL) form a helical membrane-spanning segment. The Cytoplasmic portion of the chain corresponds to 114–146 (GLIYDEIANLDLGIDKSSKNFCGKSHWWSFRLR). The helical transmembrane segment at 147–167 (LTLSIGLWMVIIIGVIPRLTL) threads the bilayer. Over 168 to 183 (GRAGPFFHWVNQVLTQ) the chain is Extracellular. Residues 184-204 (IILIMLQLKGPEYCLFVLLVY) form a helical membrane-spanning segment. The Cytoplasmic segment spans residues 205–261 (ELILRTRHVLEQLKDDLEDFDCGARIQELCVTLKQNQLLIGRIWRLVDEIGAYFRWS). The chain crosses the membrane as a helical span at residues 262-282 (MTLLFLYNGLTILHVVNWAII). The Extracellular portion of the chain corresponds to 283–296 (RSIDPNDCCQLNRL). The helical transmembrane segment at 297 to 317 (GSITFLSFNLLLTCFFSECCV) threads the bilayer. Residues 318–367 (KTYNSISYILHQIGCLPTAEEFQMLKMGLKEYILQMQHLKLLFTCGGLFD) are Cytoplasmic-facing. A helical transmembrane segment spans residues 368-388 (INIKLFGGMLVTLCGYVIIIV). Topologically, residues 389-408 (QFKIQDFALIGYRQNTSDTS) are extracellular. Residue asparagine 403 is glycosylated (N-linked (GlcNAc...) asparagine).

The protein belongs to the insect chemoreceptor superfamily. Gustatory receptor (GR) family. Gr2a subfamily.

The protein localises to the cell membrane. Functionally, probable gustatory receptor which mediates acceptance or avoidance behavior, depending on its substrates. The chain is Putative gustatory receptor 98c (Gr98c) from Drosophila melanogaster (Fruit fly).